A 168-amino-acid chain; its full sequence is ATP synthase subunit b, chloroplastic (168 aa).

The helical transmembrane segment at 20–37 (LNLAVVLPIVFTLGRDTL) threads the bilayer.

The protein belongs to the ATPase B chain family. F-type ATPases have 2 components, F(1) - the catalytic core - and F(0) - the membrane proton channel. F(1) has five subunits: alpha(3), beta(3), gamma(1), delta(1), epsilon(1). F(0) has four main subunits: a(1), b(1), b'(1) and c(10-14). The alpha and beta chains form an alternating ring which encloses part of the gamma chain. F(1) is attached to F(0) by a central stalk formed by the gamma and epsilon chains, while a peripheral stalk is formed by the delta, b and b' chains.

Its subcellular location is the plastid. It is found in the chloroplast thylakoid membrane. In terms of biological role, f(1)F(0) ATP synthase produces ATP from ADP in the presence of a proton or sodium gradient. F-type ATPases consist of two structural domains, F(1) containing the extramembraneous catalytic core and F(0) containing the membrane proton channel, linked together by a central stalk and a peripheral stalk. During catalysis, ATP synthesis in the catalytic domain of F(1) is coupled via a rotary mechanism of the central stalk subunits to proton translocation. Functionally, component of the F(0) channel, it forms part of the peripheral stalk, linking F(1) to F(0). The protein is ATP synthase subunit b, chloroplastic of Ostreococcus tauri.